The sequence spans 555 residues: Glutamine--tRNA ligase (555 aa).

The 'HIGH' region motif lies at 34–44 (PEPNGYLHIGH). Residues 35-37 (EPN) and 41-47 (HIGHAKS) contribute to the ATP site. Aspartate 67 and tyrosine 212 together coordinate L-glutamine. ATP-binding positions include threonine 231, 261 to 262 (RL), and 269 to 271 (MSK). The 'KMSKS' region signature appears at 268-272 (VMSKR). The segment at 317–324 (TKQDNTIE) is interaction with tRNA.

Belongs to the class-I aminoacyl-tRNA synthetase family. In terms of assembly, monomer.

It is found in the cytoplasm. It carries out the reaction tRNA(Gln) + L-glutamine + ATP = L-glutaminyl-tRNA(Gln) + AMP + diphosphate. The chain is Glutamine--tRNA ligase from Salmonella paratyphi B (strain ATCC BAA-1250 / SPB7).